Consider the following 525-residue polypeptide: Glutamate--cysteine ligase (525 aa).

This sequence belongs to the glutamate--cysteine ligase type 1 family. Type 1 subfamily.

It carries out the reaction L-cysteine + L-glutamate + ATP = gamma-L-glutamyl-L-cysteine + ADP + phosphate + H(+). The protein operates within sulfur metabolism; glutathione biosynthesis; glutathione from L-cysteine and L-glutamate: step 1/2. In Hahella chejuensis (strain KCTC 2396), this protein is Glutamate--cysteine ligase.